A 534-amino-acid chain; its full sequence is Hypothemycin biosynthesis cluster protein hpm4 (534 aa).

3 disordered regions span residues 34–61 (IEPAHSLEDEYSGQSGQGADDDPDSDGP), 110–130 (LQSPTTTASSAGSPSCAPLRL), and 236–287 (DGTG…KKCI). Composition is skewed to low complexity over residues 112 to 127 (SPTTTASSAGSPSCAP) and 258 to 275 (TVSSRQTRSRQAARACQT).

It participates in secondary metabolite biosynthesis. Functionally, part of the gene cluster that mediates the biosynthesis of hypothemycin, a resorcylic acid lactone (RAL) that irreversibly inhibits a subset of protein kinases with a conserved cysteine in the ATP binding site such as human ERK2. The first step is performed by both PKSs hmp3 and hmp8 and leads to the production of 7',8'-dehydrozearalenol (DHZ). The highly reducing PKS hpm8 synthesizes the reduced hexaketide (7S,11S,2E,8E)-7,11-dihydroxy-dodeca-2,8-dienoate, which is transferred downstream to the non-reducing PKS hpm3. Hpm3 then extends the reduced hexaketide to a nonaketide, after which regioselective cyclization and macrolactonization affords DHZ. The next step is the conversion of DHZ into aigialomycin C and is performed by the O-methyltransferase hmp5, the FAD-binding monooxygenase hmp7, and the cytochrome P450 monooxygenase hmp1. The wide substrate tolerance of the hmp5 and hmp7 implies that the reactions from DHZ to aigialomycin C can occur in any order. The steps from aigialomycin C to hypothemycin are less well established. The FAD-linked oxidoreductase hmp9 presumably catalyzes oxidation of the C-6' hydroxyl to a ketone. The timing of this oxidation is important, since the resulting enone functional group is a Michael acceptor that can react spontaneously with glutathione, an abundant metabolite in fungal cells. The glutathione S-transferase hmp2 catalyzes cis-trans isomerization of the 7',8' double bond with equilibrium favoring the trans isomer. The hpm6-encoded transporter might preferentially pump hypothemycin out of the cell relative to the trans isomer aigialomycin A. The cis-to-trans isomerization may be coupled with C-4' hydroxylation, since all known hypothemycin analogs containing the enone functional group also have hydroxyl groups at both C-4' and C-5'. The protein is Hypothemycin biosynthesis cluster protein hpm4 of Hypomyces subiculosus (Nectria subiculosa).